Here is a 708-residue protein sequence, read N- to C-terminus: Polyribonucleotide nucleotidyltransferase (708 aa).

Mg(2+) contacts are provided by aspartate 485 and aspartate 491. One can recognise a KH domain in the interval 552-611; that stretch reads PKTYIMSIPPDKIRDVIGSGGKVINKIIAETGVKIDIKEDGKIFVMSEDSEGAKKALKII. In terms of domain architecture, S1 motif spans 621 to 689; sequence GEIYLGKVTK…NQGRINLSRK (69 aa). The tract at residues 689 to 708 is disordered; that stretch reads KDAIKDSEKKEQNEKDVQKK.

The protein belongs to the polyribonucleotide nucleotidyltransferase family. It depends on Mg(2+) as a cofactor.

It localises to the cytoplasm. It catalyses the reaction RNA(n+1) + phosphate = RNA(n) + a ribonucleoside 5'-diphosphate. Its function is as follows. Involved in mRNA degradation. Catalyzes the phosphorolysis of single-stranded polyribonucleotides processively in the 3'- to 5'-direction. This chain is Polyribonucleotide nucleotidyltransferase, found in Clostridium kluyveri (strain NBRC 12016).